Here is a 348-residue protein sequence, read N- to C-terminus: Dihydroorotase (348 aa).

The Zn(2+) site is built by His17 and His19. Residues 19 to 21 and Asn45 each bind substrate; that span reads HLR. The Zn(2+) site is built by Lys103, His140, and His178. The residue at position 103 (Lys103) is an N6-carboxylysine. His140 contributes to the substrate binding site. A substrate-binding site is contributed by Leu223. Asp251 is a binding site for Zn(2+). The active site involves Asp251. Substrate contacts are provided by His255 and Ala267.

This sequence belongs to the metallo-dependent hydrolases superfamily. DHOase family. Class II DHOase subfamily. As to quaternary structure, homodimer. Requires Zn(2+) as cofactor.

It carries out the reaction (S)-dihydroorotate + H2O = N-carbamoyl-L-aspartate + H(+). The protein operates within pyrimidine metabolism; UMP biosynthesis via de novo pathway; (S)-dihydroorotate from bicarbonate: step 3/3. Functionally, catalyzes the reversible cyclization of carbamoyl aspartate to dihydroorotate. The chain is Dihydroorotase from Salmonella paratyphi C (strain RKS4594).